Here is a 471-residue protein sequence, read N- to C-terminus: Glutamate--tRNA ligase 1 (471 aa).

The 'HIGH' region motif lies at 10 to 20; sequence PSPTGFLHIGG. A disordered region spans residues 113–140; sequence ARKEGRPPRYDGRWRDRDPSEAPKDRDP. Positions 239-243 match the 'KMSKS' region motif; that stretch reads KLSKR. Lysine 242 is a binding site for ATP.

This sequence belongs to the class-I aminoacyl-tRNA synthetase family. Glutamate--tRNA ligase type 1 subfamily. Monomer.

The protein resides in the cytoplasm. The catalysed reaction is tRNA(Glu) + L-glutamate + ATP = L-glutamyl-tRNA(Glu) + AMP + diphosphate. Its function is as follows. Catalyzes the attachment of glutamate to tRNA(Glu) in a two-step reaction: glutamate is first activated by ATP to form Glu-AMP and then transferred to the acceptor end of tRNA(Glu). In Xanthobacter autotrophicus (strain ATCC BAA-1158 / Py2), this protein is Glutamate--tRNA ligase 1.